The sequence spans 459 residues: MPQKYFGTDGIRGKANVFPMTPDFAMKVGMAVGILFRSQNQSRRVVIGKDTRLSGYMLENALVSGFTAAGMEAFLLGPVPTPAVAMLCRSLRADLGVMISASHNPFYDNGIKLFGPDGFKLSDEIEEKIEQLIDTDLSKSLASCAEIGYAKRVEGDIYRYIEYAKRTLPRDVRLDNLRIVVDCANGAAYKAAPRALWELGAEVFAINDTPNGTNINHKCGSTDLASLKQKVHEVRADVGIALDGDGDRVLLVDEKAQTVDGDQLIAVIAEHWHKNGRLQSKGVVTTIMSNLGLERFLNSKGLDLVRTKVGDRYVVDAMRKKGYNVGGEASGHIVLSDFGTTGDGLVAALQILACMQEIQIPMSHLCQRFEPVPQIFKNVMIKNKNVLKKNPVKTAIEQATQRLGKKARLVIRASGTEPVIRIMGEGDEREMLDAVVTEMVDIITHHDTLSKACASLERS.

The Phosphoserine intermediate role is filled by Ser-102. Ser-102, Asp-243, Asp-245, and Asp-247 together coordinate Mg(2+). Ser-102 carries the phosphoserine modification.

It belongs to the phosphohexose mutase family. Mg(2+) is required as a cofactor. In terms of processing, activated by phosphorylation.

It catalyses the reaction alpha-D-glucosamine 1-phosphate = D-glucosamine 6-phosphate. Its function is as follows. Catalyzes the conversion of glucosamine-6-phosphate to glucosamine-1-phosphate. The chain is Phosphoglucosamine mutase from Bartonella henselae (strain ATCC 49882 / DSM 28221 / CCUG 30454 / Houston 1) (Rochalimaea henselae).